The sequence spans 362 residues: Protein-glutamate methylesterase/protein-glutamine glutaminase 5 (362 aa).

Positions 13–130 (RVLVVDDSAL…RRFLEESRVR (118 aa)) constitute a Response regulatory domain. D64 carries the 4-aspartylphosphate modification. Residues 172-362 (LQTTERVVVV…IPPELLRLCR (191 aa)) form the CheB-type methylesterase domain. Active-site residues include S184, H210, and D306.

It belongs to the CheB family. In terms of processing, phosphorylated by CheA. Phosphorylation of the N-terminal regulatory domain activates the methylesterase activity.

Its subcellular location is the cytoplasm. The enzyme catalyses [protein]-L-glutamate 5-O-methyl ester + H2O = L-glutamyl-[protein] + methanol + H(+). It carries out the reaction L-glutaminyl-[protein] + H2O = L-glutamyl-[protein] + NH4(+). Its function is as follows. Involved in chemotaxis. Part of a chemotaxis signal transduction system that modulates chemotaxis in response to various stimuli. Catalyzes the demethylation of specific methylglutamate residues introduced into the chemoreceptors (methyl-accepting chemotaxis proteins or MCP) by CheR. Also mediates the irreversible deamidation of specific glutamine residues to glutamic acid. This is Protein-glutamate methylesterase/protein-glutamine glutaminase 5 from Anaeromyxobacter dehalogenans (strain 2CP-C).